A 191-amino-acid polypeptide reads, in one-letter code: Dirigent protein 3 (191 aa).

The signal sequence occupies residues 1 to 21 (MSKLILILTAQILLLTATALA). Residues Asn-96 and Asn-131 are each glycosylated (N-linked (GlcNAc...) asparagine).

This sequence belongs to the plant dirigent protein family. Homodimer.

The protein localises to the secreted. It localises to the extracellular space. The protein resides in the apoplast. Its function is as follows. Dirigent proteins impart stereoselectivity on the phenoxy radical-coupling reaction, yielding optically active lignans from two molecules of coniferyl alcohol in the biosynthesis of lignans, flavonolignans, and alkaloids and thus plays a central role in plant secondary metabolism. The sequence is that of Dirigent protein 3 (DIR3) from Arabidopsis thaliana (Mouse-ear cress).